We begin with the raw amino-acid sequence, 176 residues long: Co-chaperone protein HscB homolog (176 aa).

One can recognise a J domain in the interval 8–80 (DFFALFGLPV…LRRATYLLKL (73 aa)).

It belongs to the HscB family. In terms of assembly, interacts with HscA and stimulates its ATPase activity.

Co-chaperone involved in the maturation of iron-sulfur cluster-containing proteins. Seems to help targeting proteins to be folded toward HscA. This is Co-chaperone protein HscB homolog from Cupriavidus taiwanensis (strain DSM 17343 / BCRC 17206 / CCUG 44338 / CIP 107171 / LMG 19424 / R1) (Ralstonia taiwanensis (strain LMG 19424)).